The primary structure comprises 299 residues: Biotin synthase (299 aa).

One can recognise a Radical SAM core domain in the interval T22 to R252. [4Fe-4S] cluster is bound by residues C40, C44, and C47. Residues C116, C176, and K247 each coordinate [2Fe-2S] cluster.

The protein belongs to the radical SAM superfamily. Biotin synthase family. In terms of assembly, homodimer. The cofactor is [4Fe-4S] cluster. It depends on [2Fe-2S] cluster as a cofactor.

It catalyses the reaction (4R,5S)-dethiobiotin + (sulfur carrier)-SH + 2 reduced [2Fe-2S]-[ferredoxin] + 2 S-adenosyl-L-methionine = (sulfur carrier)-H + biotin + 2 5'-deoxyadenosine + 2 L-methionine + 2 oxidized [2Fe-2S]-[ferredoxin]. The protein operates within cofactor biosynthesis; biotin biosynthesis; biotin from 7,8-diaminononanoate: step 2/2. Its function is as follows. Catalyzes the conversion of dethiobiotin (DTB) to biotin by the insertion of a sulfur atom into dethiobiotin via a radical-based mechanism. This Thermotoga petrophila (strain ATCC BAA-488 / DSM 13995 / JCM 10881 / RKU-1) protein is Biotin synthase.